The following is a 270-amino-acid chain: Putative carboxymethylenebutenolidase (270 aa).

Catalysis depends on residues C147, D204, and H236.

Belongs to the dienelactone hydrolase family.

It carries out the reaction 2-(5-oxo-2,5-dihydrofuran-2-ylidene)acetate + H2O = 4-oxohex-2-enedioate + H(+). This chain is Putative carboxymethylenebutenolidase (ysgA), found in Salmonella typhi.